A 1390-amino-acid chain; its full sequence is Hepatocyte growth factor receptor (1390 aa).

A signal peptide spans 1–24; sequence MKAPAVLAPGILVLLFTLVQRSNG. At 25–932 the chain is on the extracellular side; the sequence is ECKEALAKSE…VIVQPDQNFT (908 aa). The region spanning 27-515 is the Sema domain; that stretch reads KEALAKSEMN…TGKKITKIPL (489 aa). The N-linked (GlcNAc...) asparagine glycan is linked to Asn-45. Cystine bridges form between Cys-95–Cys-101, Cys-98–Cys-160, Cys-133–Cys-141, and Cys-172–Cys-175. A glycan (N-linked (GlcNAc...) asparagine) is linked at Asn-106. Residue Asn-149 is glycosylated (N-linked (GlcNAc...) asparagine). An N-linked (GlcNAc...) asparagine glycan is attached at Asn-202. Cystine bridges form between Cys-298-Cys-363 and Cys-385-Cys-397. 2 N-linked (GlcNAc...) asparagine glycosylation sites follow: Asn-399 and Asn-405. 4 disulfide bridges follow: Cys-520–Cys-538, Cys-526–Cys-561, Cys-529–Cys-545, and Cys-541–Cys-551. 3 consecutive IPT/TIG domains span residues 563–655, 657–739, and 742–836; these read PAIY…FSYV, PVIT…FSYR, and PIVY…LIYV. Thr-582 carries an O-linked (Man) threonine glycan. Residues Asn-607 and Asn-635 are each glycosylated (N-linked (GlcNAc...) asparagine). O-linked (Man) threonine glycosylation is found at Thr-676 and Thr-761. Residues Asn-785, Asn-879, and Asn-930 are each glycosylated (N-linked (GlcNAc...) asparagine). The chain crosses the membrane as a helical span at residues 933 to 955; sequence GLIAGVVSISIALLLLLGFFLWL. Topologically, residues 956–1390 are cytoplasmic; that stretch reads KKRKQIKDLG…TRPASFWETS (435 aa). Ser-966 carries the post-translational modification Phosphoserine. Residue Thr-977 is modified to Phosphothreonine. A phosphoserine mark is found at Ser-990, Ser-997, and Ser-1000. At Tyr-1003 the chain carries Phosphotyrosine. Residues 1078 to 1345 form the Protein kinase domain; that stretch reads VHFNEVIGRG…RISAIFSTFI (268 aa). Residues 1084–1092 and Lys-1110 contribute to the ATP site; that span reads IGRGHFGCV. The Proton acceptor role is filled by Asp-1204. Residues 1212 to 1390 are interaction with RANBP9; sequence LDEKFTVKVA…TRPASFWETS (179 aa). Phosphotyrosine is present on Tyr-1230. Tyr-1234 and Tyr-1235 each carry phosphotyrosine; by autocatalysis. Phosphothreonine is present on Thr-1289. The tract at residues 1320-1359 is interaction with MUC20; the sequence is WHPKAEMRPSFSELVSRISAIFSTFIGEHYVHVNATYVNV. Tyr-1349 and Tyr-1356 each carry phosphotyrosine; by autocatalysis. Tyr-1365 carries the phosphotyrosine modification.

Belongs to the protein kinase superfamily. Tyr protein kinase family. As to quaternary structure, heterodimer made of an alpha chain (50 kDa) and a beta chain (145 kDa) which are disulfide linked. Binds PLXNB1. Interacts when phosphorylated with downstream effectors including STAT3, PIK3R1, SRC, PCLG1, GRB2 and GAB1. Interacts with SPSB1, SPSB2 and SPSB4. Interacts with INPP5D/SHIP1. When phosphorylated at Tyr-1356, interacts with INPPL1/SHIP2. Interacts with RANBP9 and RANBP10, as well as SPSB1, SPSB2, SPSB3 and SPSB4. SPSB1 binding occurs in the presence and in the absence of HGF, however HGF treatment has a positive effect on this interaction. Interacts with MUC20; prevents interaction with GRB2 and suppresses hepatocyte growth factor-induced cell proliferation. Interacts with GRB10. Interacts with PTPN1 and PTPN2. Interacts with HSP90AA1 and HSP90AB1; the interaction suppresses MET kinase activity. Interacts with tensin TNS3. Interacts (when phosphorylated) with tensin TNS4 (via SH2 domain); the interaction increases MET protein stability by inhibiting MET endocytosis and subsequent lysosomal degradation. Post-translationally, autophosphorylated in response to ligand binding on Tyr-1234 and Tyr-1235 in the kinase domain leading to further phosphorylation of Tyr-1349 and Tyr-1356 in the C-terminal multifunctional docking site. Dephosphorylated by PTPRJ at Tyr-1349 and Tyr-1365. Dephosphorylated by PTPN1 and PTPN2. Ubiquitinated. Ubiquitination by CBL regulates the receptor stability and activity through proteasomal degradation. In terms of processing, O-mannosylation of IPT/TIG domains by TMEM260 is required for protein maturation. O-mannosylated residues are composed of single mannose glycans that are not elongated or modified.

The protein resides in the membrane. It carries out the reaction L-tyrosyl-[protein] + ATP = O-phospho-L-tyrosyl-[protein] + ADP + H(+). With respect to regulation, in its inactive state, the C-terminal tail interacts with the catalytic domain and inhibits the kinase activity. Upon ligand binding, the C-terminal tail is displaced and becomes phosphorylated, thus increasing the kinase activity. Its function is as follows. Receptor tyrosine kinase that transduces signals from the extracellular matrix into the cytoplasm by binding to hepatocyte growth factor/HGF ligand. Regulates many physiological processes including proliferation, scattering, morphogenesis and survival. Ligand binding at the cell surface induces autophosphorylation of MET on its intracellular domain that provides docking sites for downstream signaling molecules. Following activation by ligand, interacts with the PI3-kinase subunit PIK3R1, PLCG1, SRC, GRB2, STAT3 or the adapter GAB1. Recruitment of these downstream effectors by MET leads to the activation of several signaling cascades including the RAS-ERK, PI3 kinase-AKT, or PLCgamma-PKC. The RAS-ERK activation is associated with the morphogenetic effects while PI3K/AKT coordinates prosurvival effects. During embryonic development, MET signaling plays a role in gastrulation, development and migration of muscles and neuronal precursors, angiogenesis and kidney formation. In adults, participates in wound healing as well as organ regeneration and tissue remodeling. Also promotes differentiation and proliferation of hematopoietic cells. The sequence is that of Hepatocyte growth factor receptor (MET) from Pongo abelii (Sumatran orangutan).